A 196-amino-acid chain; its full sequence is MLNYELELWEKGLLVAGVDEAGRGPLAGPVVAAAVILPPFTEPFIKGDSKKLTKKEREEAYEEIKNKALAVGTAVVDSAVIDRVNILRATKLAMKRALKDLKYHYDIVITDYVKLEGENCMPLVKGDEKSLNCACASIIAKVIRDKIMEIYHKIYPDFNFASNKGYPSKTHLEKVEKGEYTEIHRKSFSPLKKKLF.

The RNase H type-2 domain occupies 13-196 (LLVAGVDEAG…SFSPLKKKLF (184 aa)). Residues aspartate 19, glutamate 20, and aspartate 111 each coordinate a divalent metal cation.

This sequence belongs to the RNase HII family. Mn(2+) is required as a cofactor. It depends on Mg(2+) as a cofactor.

The protein localises to the cytoplasm. It catalyses the reaction Endonucleolytic cleavage to 5'-phosphomonoester.. In terms of biological role, endonuclease that specifically degrades the RNA of RNA-DNA hybrids. In Aquifex aeolicus (strain VF5), this protein is Ribonuclease HII (rnhB).